The following is a 353-amino-acid chain: 6-phosphogluconolactonase (353 aa).

It belongs to the cycloisomerase 2 family.

It localises to the cytoplasm. The catalysed reaction is 6-phospho-D-glucono-1,5-lactone + H2O = 6-phospho-D-gluconate + H(+). The protein operates within carbohydrate degradation; pentose phosphate pathway; D-ribulose 5-phosphate from D-glucose 6-phosphate (oxidative stage): step 2/3. In terms of biological role, carboxylic ester hydrolase that may be involved in ulvan degradation. Ulvan is the main polysaccharide component of the Ulvales (green seaweed) cell wall. It is composed of disaccharide building blocks comprising 3-sulfated rhamnose (Rha3S) linked to D-glucuronic acid (GlcA), L-iduronic acid (IduA), or D-xylose (Xyl). Catalyzes the hydrolysis of 6-phosphogluconolactone to 6-phosphogluconate. The chain is 6-phosphogluconolactonase (pgl) from Formosa agariphila (strain DSM 15362 / KCTC 12365 / LMG 23005 / KMM 3901 / M-2Alg 35-1).